The primary structure comprises 409 residues: Putative competence-damage inducible protein (409 aa).

It belongs to the CinA family.

In Clostridium botulinum (strain ATCC 19397 / Type A), this protein is Putative competence-damage inducible protein.